Consider the following 143-residue polypeptide: Large ribosomal subunit protein bL17 (143 aa).

Residues 124–133 (GAGDRARLEA) are compositionally biased toward basic and acidic residues. Positions 124–143 (GAGDRARLEAEGTDAEAAAA) are disordered.

It belongs to the bacterial ribosomal protein bL17 family. Part of the 50S ribosomal subunit. Contacts protein L32.

This chain is Large ribosomal subunit protein bL17, found in Mesorhizobium japonicum (strain LMG 29417 / CECT 9101 / MAFF 303099) (Mesorhizobium loti (strain MAFF 303099)).